A 354-amino-acid chain; its full sequence is UDP-N-acetylglucosamine--N-acetylmuramyl-(pentapeptide) pyrophosphoryl-undecaprenol N-acetylglucosamine transferase (354 aa).

Residues 13-15 (SGG), Asn125, Arg161, Ser189, Ile242, 261-266 (ALTVSE), and Gln286 each bind UDP-N-acetyl-alpha-D-glucosamine.

This sequence belongs to the glycosyltransferase 28 family. MurG subfamily.

The protein resides in the cell inner membrane. The enzyme catalyses di-trans,octa-cis-undecaprenyl diphospho-N-acetyl-alpha-D-muramoyl-L-alanyl-D-glutamyl-meso-2,6-diaminopimeloyl-D-alanyl-D-alanine + UDP-N-acetyl-alpha-D-glucosamine = di-trans,octa-cis-undecaprenyl diphospho-[N-acetyl-alpha-D-glucosaminyl-(1-&gt;4)]-N-acetyl-alpha-D-muramoyl-L-alanyl-D-glutamyl-meso-2,6-diaminopimeloyl-D-alanyl-D-alanine + UDP + H(+). The protein operates within cell wall biogenesis; peptidoglycan biosynthesis. Its function is as follows. Cell wall formation. Catalyzes the transfer of a GlcNAc subunit on undecaprenyl-pyrophosphoryl-MurNAc-pentapeptide (lipid intermediate I) to form undecaprenyl-pyrophosphoryl-MurNAc-(pentapeptide)GlcNAc (lipid intermediate II). This is UDP-N-acetylglucosamine--N-acetylmuramyl-(pentapeptide) pyrophosphoryl-undecaprenol N-acetylglucosamine transferase from Buchnera aphidicola subsp. Schizaphis graminum (strain Sg).